A 421-amino-acid chain; its full sequence is Ig-like V-type domain-containing protein FAM187A (421 aa).

The first 18 residues, 1 to 18, serve as a signal peptide directing secretion; that stretch reads MNLAHTTVLLWAWGSLQA. At 19–377 the chain is on the extracellular side; it reads FEIVEKENIF…VSFSDPETRA (359 aa). An Ig-like V-type domain is found at 268-362; sequence PWLPQVPIQF…IAGFRLGVTS (95 aa). A disulfide bridge links C290 with C346. N318 is a glycosylation site (N-linked (GlcNAc...) asparagine). A helical membrane pass occupies residues 378 to 398; it reads ALGLILIGYMLITVIFISIHL. Residues 399–421 are Cytoplasmic-facing; the sequence is CRCCCYLFRFCPNFSPRLSRPQL.

Belongs to the FAM187 family.

The protein resides in the membrane. The protein is Ig-like V-type domain-containing protein FAM187A (FAM187A) of Bos taurus (Bovine).